The chain runs to 479 residues: NADH-quinone oxidoreductase subunit N (479 aa).

The next 14 helical transmembrane spans lie at 3–23 (MLYG…FQLI), 40–60 (IGFA…FNGI), 77–97 (IIIL…IKVA), 102–122 (HSEY…LVSA), 125–145 (FMVM…LTTF), 159–179 (YFIL…LVYG), 200–220 (MAVL…KLSI), 234–254 (APLV…LALL), 268–288 (FFYI…VGAF), 299–319 (FIAY…VANS), 327–347 (ISYF…AIII), 373–393 (SILI…AGFI), 409–429 (ELII…LNIV), and 452–472 (LVSI…MLFG).

This sequence belongs to the complex I subunit 2 family. NDH-1 is composed of 14 different subunits. Subunits NuoA, H, J, K, L, M, N constitute the membrane sector of the complex.

It localises to the cell inner membrane. The catalysed reaction is a quinone + NADH + 5 H(+)(in) = a quinol + NAD(+) + 4 H(+)(out). Functionally, NDH-1 shuttles electrons from NADH, via FMN and iron-sulfur (Fe-S) centers, to quinones in the respiratory chain. The immediate electron acceptor for the enzyme in this species is believed to be ubiquinone. Couples the redox reaction to proton translocation (for every two electrons transferred, four hydrogen ions are translocated across the cytoplasmic membrane), and thus conserves the redox energy in a proton gradient. The chain is NADH-quinone oxidoreductase subunit N from Orientia tsutsugamushi (strain Ikeda) (Rickettsia tsutsugamushi).